Consider the following 440-residue polypeptide: Transposon Ty1-JR1 Gag polyprotein (440 aa).

The span at methionine 1 to serine 16 shows a compositional bias: low complexity. 3 disordered regions span residues methionine 1–glutamine 93, proline 126–proline 173, and glycine 352–tyrosine 440. Composition is skewed to polar residues over residues threonine 48–serine 60 and glutamine 127–phenylalanine 152. Over residues threonine 153–threonine 165 the composition is skewed to low complexity. Residues asparagine 299 to histidine 401 are RNA-binding. The span at asparagine 402–serine 418 shows a compositional bias: low complexity. Serine 416 carries the post-translational modification Phosphoserine. The segment covering lysine 419–asparagine 428 has biased composition (polar residues). Residues asparagine 429–tyrosine 440 are compositionally biased toward basic and acidic residues.

Homotrimer.

The protein resides in the cytoplasm. Functionally, capsid protein (CA) is the structural component of the virus-like particle (VLP), forming the shell that encapsulates the retrotransposons dimeric RNA genome. The particles are assembled from trimer-clustered units and there are holes in the capsid shells that allow for the diffusion of macromolecules. CA also has nucleocapsid-like chaperone activity, promoting primer tRNA(i)-Met annealing to the multipartite primer-binding site (PBS), dimerization of Ty1 RNA and initiation of reverse transcription. This chain is Transposon Ty1-JR1 Gag polyprotein (TY1A-JR1), found in Saccharomyces cerevisiae (strain ATCC 204508 / S288c) (Baker's yeast).